An 85-amino-acid chain; its full sequence is MKTLLLTLVVVTIVCLDLGNTRICDDSNIPSERTPKRCQGGYNICYKINFPTPGYELLQIKGCAARCPTNPRFPKAECCATDNCI.

An N-terminal signal peptide occupies residues 1-21 (MKTLLLTLVVVTIVCLDLGNT). Disulfide bonds link Cys-24–Cys-45, Cys-38–Cys-63, Cys-67–Cys-78, and Cys-79–Cys-84.

Belongs to the three-finger toxin family. Short-chain subfamily. In terms of tissue distribution, expressed by the venom gland.

The protein localises to the secreted. The sequence is that of Three-finger toxin MALT0044C from Micrurus altirostris (Uruguayan coral snake).